The sequence spans 406 residues: Phosphopentomutase (406 aa).

D10, D305, H310, D346, H347, and H358 together coordinate Mn(2+).

It belongs to the phosphopentomutase family. Mn(2+) is required as a cofactor.

It localises to the cytoplasm. It carries out the reaction 2-deoxy-alpha-D-ribose 1-phosphate = 2-deoxy-D-ribose 5-phosphate. It catalyses the reaction alpha-D-ribose 1-phosphate = D-ribose 5-phosphate. It functions in the pathway carbohydrate degradation; 2-deoxy-D-ribose 1-phosphate degradation; D-glyceraldehyde 3-phosphate and acetaldehyde from 2-deoxy-alpha-D-ribose 1-phosphate: step 1/2. In terms of biological role, isomerase that catalyzes the conversion of deoxy-ribose 1-phosphate (dRib-1-P) and ribose 1-phosphate (Rib-1-P) to deoxy-ribose 5-phosphate (dRib-5-P) and ribose 5-phosphate (Rib-5-P), respectively. This Sinorhizobium fredii (strain NBRC 101917 / NGR234) protein is Phosphopentomutase.